The sequence spans 581 residues: Proline--tRNA ligase (581 aa).

The protein belongs to the class-II aminoacyl-tRNA synthetase family. ProS type 1 subfamily. Homodimer.

The protein resides in the cytoplasm. The catalysed reaction is tRNA(Pro) + L-proline + ATP = L-prolyl-tRNA(Pro) + AMP + diphosphate. Catalyzes the attachment of proline to tRNA(Pro) in a two-step reaction: proline is first activated by ATP to form Pro-AMP and then transferred to the acceptor end of tRNA(Pro). As ProRS can inadvertently accommodate and process non-cognate amino acids such as alanine and cysteine, to avoid such errors it has two additional distinct editing activities against alanine. One activity is designated as 'pretransfer' editing and involves the tRNA(Pro)-independent hydrolysis of activated Ala-AMP. The other activity is designated 'posttransfer' editing and involves deacylation of mischarged Ala-tRNA(Pro). The misacylated Cys-tRNA(Pro) is not edited by ProRS. The sequence is that of Proline--tRNA ligase from Blochmanniella pennsylvanica (strain BPEN).